We begin with the raw amino-acid sequence, 658 residues long: Translation factor GUF1, mitochondrial (658 aa).

Residues 45–231 (ENYRNFSIVA…AVIDRIPPPT (187 aa)) enclose the tr-type G domain. GTP contacts are provided by residues 54–61 (AHIDHGKS), 123–127 (DTPGH), and 177–180 (NKID).

It belongs to the TRAFAC class translation factor GTPase superfamily. Classic translation factor GTPase family. LepA subfamily.

Its subcellular location is the mitochondrion inner membrane. It carries out the reaction GTP + H2O = GDP + phosphate + H(+). Its function is as follows. Promotes mitochondrial protein synthesis. May act as a fidelity factor of the translation reaction, by catalyzing a one-codon backward translocation of tRNAs on improperly translocated ribosomes. Binds to mitochondrial ribosomes in a GTP-dependent manner. The polypeptide is Translation factor GUF1, mitochondrial (Vanderwaltozyma polyspora (strain ATCC 22028 / DSM 70294 / BCRC 21397 / CBS 2163 / NBRC 10782 / NRRL Y-8283 / UCD 57-17) (Kluyveromyces polysporus)).